A 147-amino-acid polypeptide reads, in one-letter code: Hemoglobin subunit beta-1 (147 aa).

The 145-residue stretch at 3-147 (EWTDKERSII…VVSALGKQYH (145 aa)) folds into the Globin domain. H64 and H93 together coordinate heme b.

The protein belongs to the globin family. Heterotetramer of two alpha chains and two beta chains. Red blood cells.

Functionally, involved in oxygen transport from gills to the various peripheral tissues. This chain is Hemoglobin subunit beta-1 (hbb1), found in Pagothenia borchgrevinki (Bald rockcod).